Consider the following 211-residue polypeptide: Transcription factor bHLH150 (211 aa).

A compositionally biased stretch (polar residues) spans 1 to 15 (MSSEQGNGSNPSTSP). The interval 1-23 (MSSEQGNGSNPSTSPEVEGTKTI) is disordered. One can recognise a bHLH domain in the interval 135–184 (AIRGSGGSGRRRKLSAVGNRVRVLGGLVPGCRRTALPELLDETADYIAAL).

Homodimer. Interacts with PRE3 and ASK7. Phosphorylated by ASK7.

Its subcellular location is the nucleus. In terms of biological role, atypical bHLH transcription factor probably unable to bind DNA. Negatively regulates brassinosteroid signaling. The chain is Transcription factor bHLH150 (BHLH150) from Arabidopsis thaliana (Mouse-ear cress).